The primary structure comprises 241 residues: Parkin coregulated gene protein homolog (241 aa).

Microtubule inner protein component of sperm flagellar doublet microtubules. Forms a large molecular chaperone complex containing heat shock proteins 70 and 90 and chaperonin components. Interacts with STIP1, PRKN, GPR37, HSPA8, TCP1/CCT1, CCT2, CCT3, CCT4, CCT5, CCT6A, CCT7 and CCT8. Interacts with MEIG1.

Its subcellular location is the cytoplasm. It localises to the cytoskeleton. It is found in the cilium axoneme. The protein localises to the flagellum axoneme. Functionally, microtubule inner protein (MIP) part of the dynein-decorated doublet microtubules (DMTs) in cilia axoneme, which is required for motile cilia beating. Suppresses cell death induced by accumulation of unfolded Pael receptor (Pael-R, a substrate of Parkin). Facilitates the formation of inclusions consisting of Pael-R, molecular chaperones, protein degradation molecules and itself when proteasome is inhibited. May play an important role in the formation of Lewy bodies and protection of dopaminergic neurons against Parkinson disease. The chain is Parkin coregulated gene protein homolog (Pacrg) from Mus musculus (Mouse).